The chain runs to 50 residues: PhoP/PhoQ regulator MgrB (50 aa).

The Cytoplasmic portion of the chain corresponds to 1-4 (MLDL). Residues 5-27 (NITKLVTTVVIIAACCLFYLLAL) form a helical membrane-spanning segment. The Periplasmic portion of the chain corresponds to 28–50 (DSYCDQGGTFSTGICAITTIVPW).

The protein belongs to the MgrB family. In terms of assembly, probably interacts with the periplasmic domain of PhoQ.

It is found in the cell inner membrane. Its function is as follows. PhoP-regulated transcription is redox-sensitive, being activated when the periplasm becomes more reducing. MgrB acts between DsbA/DsbB and PhoP/PhoQ in this pathway. Represses PhoP/PhoQ signaling, possibly by binding to the periplasmic domain of PhoQ, altering its activity and that of downstream effector PhoP. This chain is PhoP/PhoQ regulator MgrB, found in Yersinia pestis.